A 92-amino-acid polypeptide reads, in one-letter code: Small ribosomal subunit protein uS19 (92 aa).

It belongs to the universal ribosomal protein uS19 family.

In terms of biological role, protein S19 forms a complex with S13 that binds strongly to the 16S ribosomal RNA. The polypeptide is Small ribosomal subunit protein uS19 (Brucella anthropi (strain ATCC 49188 / DSM 6882 / CCUG 24695 / JCM 21032 / LMG 3331 / NBRC 15819 / NCTC 12168 / Alc 37) (Ochrobactrum anthropi)).